The following is a 100-amino-acid chain: uncharacterized protein (100 aa).

The next 3 helical transmembrane spans lie at 11 to 33 (VWSILFVTGIVTACLFAGVSVLM), 45 to 64 (WMLAGLIVLGVFAIWYSLVY), and 68 to 90 (WEGAALGMLGFNVIFGAIAGYLI).

It is found in the cell membrane. This is an uncharacterized protein from Bacillus subtilis (strain 168).